The following is a 344-amino-acid chain: tRNA(Ile)-lysidine synthase (344 aa).

Position 30 to 35 (Ser30 to Ser35) interacts with ATP. A disordered region spans residues Pro323–Tyr344.

Belongs to the tRNA(Ile)-lysidine synthase family.

The protein localises to the cytoplasm. It catalyses the reaction cytidine(34) in tRNA(Ile2) + L-lysine + ATP = lysidine(34) in tRNA(Ile2) + AMP + diphosphate + H(+). Ligates lysine onto the cytidine present at position 34 of the AUA codon-specific tRNA(Ile) that contains the anticodon CAU, in an ATP-dependent manner. Cytidine is converted to lysidine, thus changing the amino acid specificity of the tRNA from methionine to isoleucine. The protein is tRNA(Ile)-lysidine synthase of Thermosynechococcus vestitus (strain NIES-2133 / IAM M-273 / BP-1).